The sequence spans 254 residues: UPF0246 protein lpp1320 (254 aa).

This sequence belongs to the UPF0246 family.

The chain is UPF0246 protein lpp1320 from Legionella pneumophila (strain Paris).